Consider the following 516-residue polypeptide: Thioredoxin reductase 2, mitochondrial (516 aa).

62–79 is an FAD binding site; it reads DYVKPTPVGTKWGIGGTC. Residues cysteine 79 and cysteine 84 are joined by a disulfide bond. Residue histidine 489 is the Proton acceptor of the active site.

Belongs to the class-I pyridine nucleotide-disulfide oxidoreductase family. In terms of assembly, homodimer. Requires FAD as cofactor.

It localises to the mitochondrion. It carries out the reaction [thioredoxin]-dithiol + NADP(+) = [thioredoxin]-disulfide + NADPH + H(+). In terms of biological role, thioredoxin system is a major player in glutathione metabolism, due to the demonstrated absence of a glutathione reductase. Functionally interacts with the Sod/Cat reactive oxidation species (ROS) defense system and thereby has a role in preadult development and life span. Lack of a glutathione reductase suggests antioxidant defense in Drosophila, and probably in related insects, differs fundamentally from that in other organisms. The sequence is that of Thioredoxin reductase 2, mitochondrial from Drosophila melanogaster (Fruit fly).